Reading from the N-terminus, the 133-residue chain is Fatty acid-binding protein (133 aa).

The protein belongs to the calycin superfamily. Fatty-acid binding protein (FABP) family.

This chain is Fatty acid-binding protein, found in Clonorchis sinensis (Chinese liver fluke).